Consider the following 1075-residue polypeptide: DNA-directed RNA polymerase subunit beta (1075 aa).

The protein belongs to the RNA polymerase beta chain family. As to quaternary structure, in plastids the minimal PEP RNA polymerase catalytic core is composed of four subunits: alpha, beta, beta', and beta''. When a (nuclear-encoded) sigma factor is associated with the core the holoenzyme is formed, which can initiate transcription.

Its subcellular location is the plastid. The protein localises to the chloroplast. The catalysed reaction is RNA(n) + a ribonucleoside 5'-triphosphate = RNA(n+1) + diphosphate. Its function is as follows. DNA-dependent RNA polymerase catalyzes the transcription of DNA into RNA using the four ribonucleoside triphosphates as substrates. The protein is DNA-directed RNA polymerase subunit beta of Saccharum officinarum (Sugarcane).